A 102-amino-acid polypeptide reads, in one-letter code: Large ribosomal subunit protein uL24 (102 aa).

It belongs to the universal ribosomal protein uL24 family. Part of the 50S ribosomal subunit.

In terms of biological role, one of two assembly initiator proteins, it binds directly to the 5'-end of the 23S rRNA, where it nucleates assembly of the 50S subunit. One of the proteins that surrounds the polypeptide exit tunnel on the outside of the subunit. This is Large ribosomal subunit protein uL24 from Ralstonia pickettii (strain 12J).